Reading from the N-terminus, the 96-residue chain is UPF0235 protein ECA3630 (96 aa).

The protein belongs to the UPF0235 family.

The polypeptide is UPF0235 protein ECA3630 (Pectobacterium atrosepticum (strain SCRI 1043 / ATCC BAA-672) (Erwinia carotovora subsp. atroseptica)).